We begin with the raw amino-acid sequence, 347 residues long: Probable nitronate monooxygenase (347 aa).

FMN is bound by residues Asn-69, Gln-171, Gly-176, Gly-213, and 232–235 (QIGS).

This sequence belongs to the nitronate monooxygenase family. NMO class I subfamily. Requires FMN as cofactor.

The catalysed reaction is 3 propionate 3-nitronate + 3 O2 + H2O = 3 3-oxopropanoate + 2 nitrate + nitrite + H2O2 + 3 H(+). Nitronate monooxygenase that uses molecular oxygen to catalyze the oxidative denitrification of alkyl nitronates. Acts on propionate 3-nitronate (P3N), the presumed physiological substrate. Probably functions in the detoxification of P3N, a metabolic poison produced by plants and fungi as a defense mechanism. The chain is Probable nitronate monooxygenase (yrpB) from Bacillus subtilis (strain 168).